The following is a 218-amino-acid chain: Ribonuclease HII (218 aa).

An RNase H type-2 domain is found at 23 to 216 (RFLCGVDEAG…VREAIARGLV (194 aa)). Positions 29, 30, and 125 each coordinate a divalent metal cation.

Belongs to the RNase HII family. The cofactor is Mn(2+). It depends on Mg(2+) as a cofactor.

Its subcellular location is the cytoplasm. The catalysed reaction is Endonucleolytic cleavage to 5'-phosphomonoester.. In terms of biological role, endonuclease that specifically degrades the RNA of RNA-DNA hybrids. The protein is Ribonuclease HII of Cupriavidus pinatubonensis (strain JMP 134 / LMG 1197) (Cupriavidus necator (strain JMP 134)).